Here is a 513-residue protein sequence, read N- to C-terminus: DNA damage response protein kinase DUN1 (513 aa).

The span at 1–12 shows a compositional bias: basic and acidic residues; that stretch reads MSLSTKREHSGD. The disordered stretch occupies residues 1–29; sequence MSLSTKREHSGDVTDSSFKRQQRSNKPSS. Residue S10 is modified to Phosphoserine. In terms of domain architecture, FHA spans 56-112; that stretch reads TTIGRSRSCDVILSEPDISTFHAEFHLLQMDVDNFQRNLINVIDKSRNGTFINGNRL. A Phosphoserine modification is found at S139. The Protein kinase domain occupies 200 to 480; it reads YLLGKELGAG…IDEALNHPWF (281 aa). ATP-binding positions include 206-214 and K229; that span reads LGAGHYALV. The active-site Proton acceptor is D328. Residue T380 is modified to Phosphothreonine.

This sequence belongs to the protein kinase superfamily. CAMK Ser/Thr protein kinase family. CHEK2 subfamily. Interacts with the PAB-dependent poly(A)-nuclease (PAN) complex regulatory subunit PAN3 via its forkhead-associated (FHA) domain. Post-translationally, autophosphorylation increases in response to DNA damage.

Its subcellular location is the nucleus. The catalysed reaction is L-seryl-[protein] + ATP = O-phospho-L-seryl-[protein] + ADP + H(+). The enzyme catalyses L-threonyl-[protein] + ATP = O-phospho-L-threonyl-[protein] + ADP + H(+). Its function is as follows. Transducer of the DNA damage signal. Phosphorylates SML1 on serine residues. Cooperates with the PAN deadenylation complex in the regulation of RAD5 mRNA levels and cell survival in response to replicational stress. The sequence is that of DNA damage response protein kinase DUN1 (DUN1) from Saccharomyces cerevisiae (strain ATCC 204508 / S288c) (Baker's yeast).